We begin with the raw amino-acid sequence, 374 residues long: Ribosomal RNA large subunit methyltransferase G (374 aa).

It belongs to the methyltransferase superfamily. RlmG family.

The protein localises to the cytoplasm. The catalysed reaction is guanosine(1835) in 23S rRNA + S-adenosyl-L-methionine = N(2)-methylguanosine(1835) in 23S rRNA + S-adenosyl-L-homocysteine + H(+). Its function is as follows. Specifically methylates the guanine in position 1835 (m2G1835) of 23S rRNA. In Pseudomonas putida (strain ATCC 700007 / DSM 6899 / JCM 31910 / BCRC 17059 / LMG 24140 / F1), this protein is Ribosomal RNA large subunit methyltransferase G.